The primary structure comprises 86 residues: Large ribosomal subunit protein bL27 (86 aa).

Positions 1–10 (MAQKKGGGST) are enriched in gly residues. Positions 1 to 20 (MAQKKGGGSTRNGRDSESKR) are disordered.

It belongs to the bacterial ribosomal protein bL27 family.

This Polynucleobacter necessarius subsp. necessarius (strain STIR1) protein is Large ribosomal subunit protein bL27.